We begin with the raw amino-acid sequence, 506 residues long: Maturase K (506 aa).

The protein belongs to the intron maturase 2 family. MatK subfamily.

It localises to the plastid. Its subcellular location is the chloroplast. In terms of biological role, usually encoded in the trnK tRNA gene intron. Probably assists in splicing its own and other chloroplast group II introns. This is Maturase K from Trifolium willdenovii (Tomcat clover).